Here is a 360-residue protein sequence, read N- to C-terminus: Photosystem II protein D1 (360 aa).

3 consecutive transmembrane segments (helical) span residues 29–46, 118–133, and 142–156; these read YIGW…TATS, HFLT…EWEL, and WISV…AAAA. His-118 lines the chlorophyll a pocket. Tyr-126 contributes to the pheophytin a binding site. [CaMn4O5] cluster-binding residues include Asp-170 and Glu-189. Residues 197-218 traverse the membrane as a helical segment; that stretch reads FHQLGVAGVFGGSLFSAMHGSL. His-198 contacts chlorophyll a. A quinone contacts are provided by residues His-215 and 264-265; that span reads SF. His-215 serves as a coordination point for Fe cation. His-272 is a Fe cation binding site. Residues 274–288 traverse the membrane as a helical segment; the sequence is FLGLWPVVGIWLTAL. 4 residues coordinate [CaMn4O5] cluster: His-332, Glu-333, Asp-342, and Ala-344. Residues 345 to 360 constitute a propeptide that is removed on maturation; the sequence is SGESLPVALTAPAVNG.

It belongs to the reaction center PufL/M/PsbA/D family. In terms of assembly, PSII is composed of 1 copy each of membrane proteins PsbA, PsbB, PsbC, PsbD, PsbE, PsbF, PsbH, PsbI, PsbJ, PsbK, PsbL, PsbM, PsbT, PsbX, PsbY, PsbZ, Psb30/Ycf12, at least 3 peripheral proteins of the oxygen-evolving complex and a large number of cofactors. It forms dimeric complexes. It depends on The D1/D2 heterodimer binds P680, chlorophylls that are the primary electron donor of PSII, and subsequent electron acceptors. It shares a non-heme iron and each subunit binds pheophytin, quinone, additional chlorophylls, carotenoids and lipids. D1 provides most of the ligands for the Mn4-Ca-O5 cluster of the oxygen-evolving complex (OEC). There is also a Cl(-1) ion associated with D1 and D2, which is required for oxygen evolution. The PSII complex binds additional chlorophylls, carotenoids and specific lipids. as a cofactor. Tyr-161 forms a radical intermediate that is referred to as redox-active TyrZ, YZ or Y-Z. In terms of processing, C-terminally processed by CTPA; processing is essential to allow assembly of the oxygen-evolving complex and thus photosynthetic growth.

Its subcellular location is the plastid. It is found in the chloroplast thylakoid membrane. The catalysed reaction is 2 a plastoquinone + 4 hnu + 2 H2O = 2 a plastoquinol + O2. Its function is as follows. Photosystem II (PSII) is a light-driven water:plastoquinone oxidoreductase that uses light energy to abstract electrons from H(2)O, generating O(2) and a proton gradient subsequently used for ATP formation. It consists of a core antenna complex that captures photons, and an electron transfer chain that converts photonic excitation into a charge separation. The D1/D2 (PsbA/PsbD) reaction center heterodimer binds P680, the primary electron donor of PSII as well as several subsequent electron acceptors. This Porphyra purpurea (Red seaweed) protein is Photosystem II protein D1.